The chain runs to 292 residues: Acetylglutamate kinase (292 aa).

Substrate is bound by residues 60 to 61 (GG), Arg82, and Asn187.

It belongs to the acetylglutamate kinase family. ArgB subfamily.

It is found in the cytoplasm. The enzyme catalyses N-acetyl-L-glutamate + ATP = N-acetyl-L-glutamyl 5-phosphate + ADP. It participates in amino-acid biosynthesis; L-arginine biosynthesis; N(2)-acetyl-L-ornithine from L-glutamate: step 2/4. Functionally, catalyzes the ATP-dependent phosphorylation of N-acetyl-L-glutamate. The protein is Acetylglutamate kinase of Methanobrevibacter smithii (strain ATCC 35061 / DSM 861 / OCM 144 / PS).